We begin with the raw amino-acid sequence, 340 residues long: Glycerol-3-phosphate dehydrogenase [NAD(P)+] (340 aa).

The NADPH site is built by tryptophan 11, arginine 33, and lysine 110. Positions 110, 144, and 146 each coordinate sn-glycerol 3-phosphate. Alanine 148 contacts NADPH. Lysine 199, aspartate 252, serine 262, arginine 263, and asparagine 264 together coordinate sn-glycerol 3-phosphate. Lysine 199 (proton acceptor) is an active-site residue. Arginine 263 is a binding site for NADPH. Valine 287 and glutamate 289 together coordinate NADPH.

The protein belongs to the NAD-dependent glycerol-3-phosphate dehydrogenase family.

It is found in the cytoplasm. The catalysed reaction is sn-glycerol 3-phosphate + NAD(+) = dihydroxyacetone phosphate + NADH + H(+). The enzyme catalyses sn-glycerol 3-phosphate + NADP(+) = dihydroxyacetone phosphate + NADPH + H(+). It participates in membrane lipid metabolism; glycerophospholipid metabolism. Its function is as follows. Catalyzes the reduction of the glycolytic intermediate dihydroxyacetone phosphate (DHAP) to sn-glycerol 3-phosphate (G3P), the key precursor for phospholipid synthesis. The chain is Glycerol-3-phosphate dehydrogenase [NAD(P)+] from Polynucleobacter asymbioticus (strain DSM 18221 / CIP 109841 / QLW-P1DMWA-1) (Polynucleobacter necessarius subsp. asymbioticus).